The following is a 118-amino-acid chain: 5-hydroxyisourate hydrolase (118 aa).

3 residues coordinate substrate: His7, Arg46, and Tyr115.

It belongs to the transthyretin family. 5-hydroxyisourate hydrolase subfamily. As to quaternary structure, homotetramer.

It catalyses the reaction 5-hydroxyisourate + H2O = 5-hydroxy-2-oxo-4-ureido-2,5-dihydro-1H-imidazole-5-carboxylate + H(+). Functionally, catalyzes the hydrolysis of 5-hydroxyisourate (HIU) to 2-oxo-4-hydroxy-4-carboxy-5-ureidoimidazoline (OHCU). In Brucella melitensis biotype 1 (strain ATCC 23456 / CCUG 17765 / NCTC 10094 / 16M), this protein is 5-hydroxyisourate hydrolase.